Reading from the N-terminus, the 298-residue chain is Type II methyltransferase M.MjaIV (298 aa).

The catalysed reaction is a 2'-deoxyadenosine in DNA + S-adenosyl-L-methionine = an N(6)-methyl-2'-deoxyadenosine in DNA + S-adenosyl-L-homocysteine + H(+). Its function is as follows. A methylase that recognizes the double-stranded sequence 5'-GTNNAC-3', methylates A-5 on both strands, and protects the DNA from cleavage by the MjaIV endonuclease. The protein is Type II methyltransferase M.MjaIV (mjaIVMP) of Methanocaldococcus jannaschii (strain ATCC 43067 / DSM 2661 / JAL-1 / JCM 10045 / NBRC 100440) (Methanococcus jannaschii).